Reading from the N-terminus, the 215-residue chain is MGVRAQQKEKTRRSLVEAAFSQLSAERSFASLSLREVAREAGIAPTSFYRHFRDVDELGLTMVDESGLMLRQLMRQARQRIAKGGSVIRTSVSTFMEFIGNNPNAFRLLLRERSGTSAAFRAAVAREIQHFIAELADYLELENHMPRAFTEAQAEAMVTIVFSAGAEALDIGVEQRRQLEERLVLQLRMISKGAYYWYRREQEKTAIIPGNVKDE.

In terms of domain architecture, HTH tetR-type spans 10-70 (KTRRSLVEAA…TMVDESGLML (61 aa)). Positions 33–52 (SLREVAREAGIAPTSFYRHF) form a DNA-binding region, H-T-H motif.

Homodimer.

The protein resides in the cytoplasm. Functionally, represses the transcription of fabB, involved in unsaturated fatty acid (UFA) biosynthesis. By controlling UFA production, FabR directly influences the physical properties of the membrane bilayer. The polypeptide is HTH-type transcriptional repressor FabR (Escherichia coli O9:H4 (strain HS)).